Reading from the N-terminus, the 319-residue chain is Transcription factor STKL2 (319 aa).

The interval 1 to 119 (MAPLESPATA…NKKANPQRVW (119 aa)) is disordered. The segment covering 21 to 34 (EIFKSSSEESKPKD) has biased composition (basic and acidic residues). Residues 38 to 55 (VPSSKTLKSPSAAVNSKT) are compositionally biased toward polar residues. Over residues 89-112 (RAGEGSTSRDMHVKRVKKEDDNKK) the composition is skewed to basic and acidic residues.

The protein belongs to the GeBP family. As to expression, expressed strongly in leaves and flowers, weakly in roots, and very weakly in stems.

Its subcellular location is the nucleus. Its function is as follows. Transcription repressor that binds DNA in a sequence-specific manner, 5'-GCCT-3', to regulate the expression of PGR. Acts as a modulatory component for the glucose-triggered developmental leaf growth process. This Arabidopsis thaliana (Mouse-ear cress) protein is Transcription factor STKL2.